Reading from the N-terminus, the 316-residue chain is Small ribosomal subunit biogenesis GTPase RsgA (316 aa).

The 166-residue stretch at 83–248 (DQYKSKLFAA…LIDSPGFQEF (166 aa)) folds into the CP-type G domain. GTP is bound by residues 131 to 134 (NKTD) and 185 to 193 (GQSGMGKST). 4 residues coordinate Zn(2+): C272, C277, H279, and C285.

The protein belongs to the TRAFAC class YlqF/YawG GTPase family. RsgA subfamily. In terms of assembly, monomer. Associates with 30S ribosomal subunit, binds 16S rRNA. Zn(2+) serves as cofactor.

Its subcellular location is the cytoplasm. In terms of biological role, one of several proteins that assist in the late maturation steps of the functional core of the 30S ribosomal subunit. Helps release RbfA from mature subunits. May play a role in the assembly of ribosomal proteins into the subunit. Circularly permuted GTPase that catalyzes slow GTP hydrolysis, GTPase activity is stimulated by the 30S ribosomal subunit. The protein is Small ribosomal subunit biogenesis GTPase RsgA of Paraburkholderia xenovorans (strain LB400).